The chain runs to 108 residues: Thiosulfate sulfurtransferase GlpE (108 aa).

The Rhodanese domain occupies 17–105 (HQGAAVLVDI…WHRHFPADVA (89 aa)). Cys65 (cysteine persulfide intermediate) is an active-site residue.

It belongs to the GlpE family.

It localises to the cytoplasm. The enzyme catalyses thiosulfate + hydrogen cyanide = thiocyanate + sulfite + 2 H(+). The catalysed reaction is thiosulfate + [thioredoxin]-dithiol = [thioredoxin]-disulfide + hydrogen sulfide + sulfite + 2 H(+). Transferase that catalyzes the transfer of sulfur from thiosulfate to thiophilic acceptors such as cyanide or dithiols. May function in a CysM-independent thiosulfate assimilation pathway by catalyzing the conversion of thiosulfate to sulfite, which can then be used for L-cysteine biosynthesis. The sequence is that of Thiosulfate sulfurtransferase GlpE from Salmonella arizonae (strain ATCC BAA-731 / CDC346-86 / RSK2980).